The following is a 330-amino-acid chain: MADTSSRTDVSTDGDTDHRDLGSDRGHMHAAASDSSDRSKDKLDQKTLRRLAQNREAARKSRLRKKAYVQQLENSRLKLTQLEQELQRARQQGVFISSSGDQAHSTGGNGALAFDAEHSRWLEEKNRQMNELRSALNAHAGDTELRIIVDGVMAHYEELFRIKSNAAKNDVFHLLSGMWKTPAERCFLWLGGFRSSELLKLLANQLEPMTERQVMGINSLQQTSQQAEDALSQGMESLQQSLADTLSSGTLGSSSSDNVASYMGQMAMAMGQLGTLEGFIRQADNLRLQTLQQMLRVLTTRQSARALLAIHDYSSRLRALSSLWLARPRE.

Residues 1-13 are compositionally biased toward polar residues; it reads MADTSSRTDVSTD. Residues 1-45 form a disordered region; the sequence is MADTSSRTDVSTDGDTDHRDLGSDRGHMHAAASDSSDRSKDKLDQ. 2 stretches are compositionally biased toward basic and acidic residues: residues 15 to 27 and 35 to 45; these read DTDH…DRGH and SSDRSKDKLDQ. The bZIP domain maps to 44 to 107; the sequence is DQKTLRRLAQ…SSGDQAHSTG (64 aa). Coiled-coil stretches lie at residues 45 to 142 and 217 to 233; these read QKTL…HAGD and INSL…ALSQ. Residues 46–66 are basic motif; that stretch reads KTLRRLAQNREAARKSRLRKK. Positions 72-86 are leucine-zipper; it reads LENSRLKLTQLEQEL. The region spanning 111-327 is the DOG1 domain; that stretch reads ALAFDAEHSR…RALSSLWLAR (217 aa).

The protein belongs to the bZIP family. In terms of assembly, binds DNA as a dimer. Interacts with NPR1, NPR3 and NPR4. Interacts with GRXC9/GRX480. In terms of tissue distribution, expressed predominantly in roots and flowers.

The protein resides in the nucleus. Functionally, transcriptional activator that binds specifically to the DNA sequence 5'-TGACG-3'. Recognizes ocs elements like the as-1 motif of the cauliflower mosaic virus 35S promoter. Binding to the as-1-like cis elements mediate auxin- and salicylic acid-inducible transcription. May be involved in the induction of the systemic acquired resistance (SAR) via its interaction with NPR1. Could also bind to the Hex-motif (5'-TGACGTGG-3') another cis-acting element found in plant histone promoters. This Arabidopsis thaliana (Mouse-ear cress) protein is Transcription factor TGA6 (TGA6).